The primary structure comprises 426 residues: Serine--tRNA ligase (426 aa).

231 to 233 (TLE) is an L-serine binding site. An ATP-binding site is contributed by 262 to 264 (RSE). An L-serine-binding site is contributed by Glu285. 349–352 (EISS) provides a ligand contact to ATP. Ser385 contributes to the L-serine binding site.

Belongs to the class-II aminoacyl-tRNA synthetase family. Type-1 seryl-tRNA synthetase subfamily. As to quaternary structure, homodimer. The tRNA molecule binds across the dimer.

The protein localises to the cytoplasm. The catalysed reaction is tRNA(Ser) + L-serine + ATP = L-seryl-tRNA(Ser) + AMP + diphosphate + H(+). The enzyme catalyses tRNA(Sec) + L-serine + ATP = L-seryl-tRNA(Sec) + AMP + diphosphate + H(+). The protein operates within aminoacyl-tRNA biosynthesis; selenocysteinyl-tRNA(Sec) biosynthesis; L-seryl-tRNA(Sec) from L-serine and tRNA(Sec): step 1/1. Its function is as follows. Catalyzes the attachment of serine to tRNA(Ser). Is also able to aminoacylate tRNA(Sec) with serine, to form the misacylated tRNA L-seryl-tRNA(Sec), which will be further converted into selenocysteinyl-tRNA(Sec). The sequence is that of Serine--tRNA ligase from Malacoplasma penetrans (strain HF-2) (Mycoplasma penetrans).